Consider the following 1093-residue polypeptide: Probable phosphorylase b kinase regulatory subunit beta (1093 aa).

The disordered stretch occupies residues 1–27 (MRDVPKSLGLSVTTPGGSSGAPDSGRH). Calmodulin-binding regions lie at residues 6 to 27 (KSLG…SGRH), 751 to 778 (QLYH…IVDS), and 905 to 936 (EKLT…ILQR). Cysteine 1090 is lipidated: S-farnesyl cysteine.

Belongs to the phosphorylase b kinase regulatory chain family. In terms of processing, although the final Cys may be farnesylated, the terminal tripeptide is probably not removed, and the C-terminus is not methylated.

It is found in the cell membrane. It participates in glycan biosynthesis; glycogen metabolism. Functionally, phosphorylase b kinase catalyzes the phosphorylation of serine in certain substrates, including troponin I. The beta chain acts as a regulatory unit and modulates the activity of the holoenzyme in response to phosphorylation. This Drosophila melanogaster (Fruit fly) protein is Probable phosphorylase b kinase regulatory subunit beta.